Here is a 135-residue protein sequence, read N- to C-terminus: Small ribosomal subunit protein uS11 (135 aa).

This sequence belongs to the universal ribosomal protein uS11 family. Part of the 30S ribosomal subunit. Interacts with proteins S7 and S18. Binds to IF-3.

Functionally, located on the platform of the 30S subunit, it bridges several disparate RNA helices of the 16S rRNA. Forms part of the Shine-Dalgarno cleft in the 70S ribosome. The protein is Small ribosomal subunit protein uS11 of Solibacter usitatus (strain Ellin6076).